We begin with the raw amino-acid sequence, 834 residues long: ABC transporter A family member 11 (834 aa).

7 helical membrane passes run 35–55 (FFIL…ILNN), 188–208 (MPMI…ILIV), 235–255 (VFDY…LYSF), 269–289 (FLLF…LQFI), 297–319 (NKWL…SVAF), 324–346 (PLIV…LKAL), and 355–375 (SYTI…IYFI). The region spanning 452–693 (LDKPSIIERC…YGSGYTIDII (242 aa)) is the ABC transporter domain. 495–502 (GPNGSGKS) contributes to the ATP binding site. A compositionally biased stretch (polar residues) spans 779 to 789 (KQQTNNKSNII). Residues 779 to 834 (KQQTNNKSNIINNNNNNNNNNNNNNNNNNNNNNNNNNNNNNNNNTNNNTNNNQLIN) are disordered. A compositionally biased stretch (low complexity) spans 790–834 (NNNNNNNNNNNNNNNNNNNNNNNNNNNNNNNNNTNNNTNNNQLIN).

Belongs to the ABC transporter superfamily. ABCA family.

The protein localises to the membrane. The protein is ABC transporter A family member 11 (abcA11) of Dictyostelium discoideum (Social amoeba).